A 705-amino-acid chain; its full sequence is Polyribonucleotide nucleotidyltransferase (705 aa).

Asp-486 and Asp-492 together coordinate Mg(2+). The KH domain occupies 553–612 (PRIHTIRINPDKIKDVIGKGGSVIRALTEETGTTIEIEDDGTVKIAATDGEKAKFAIRRI). The region spanning 622-690 (GRIYQGKVTR…RQGRVRLSIK (69 aa)) is the S1 motif domain.

Belongs to the polyribonucleotide nucleotidyltransferase family. As to quaternary structure, component of the RNA degradosome, which is a multiprotein complex involved in RNA processing and mRNA degradation. It depends on Mg(2+) as a cofactor.

It localises to the cytoplasm. It catalyses the reaction RNA(n+1) + phosphate = RNA(n) + a ribonucleoside 5'-diphosphate. Its function is as follows. Involved in mRNA degradation. Catalyzes the phosphorolysis of single-stranded polyribonucleotides processively in the 3'- to 5'-direction. This chain is Polyribonucleotide nucleotidyltransferase, found in Serratia proteamaculans (strain 568).